A 258-amino-acid chain; its full sequence is Protein UL24 homolog (258 aa).

The protein belongs to the herpesviridae UL24 family.

It is found in the virion. Its subcellular location is the host cytoplasm. The protein resides in the host nucleus. The protein localises to the host nucleolus. It localises to the host Golgi apparatus. Functionally, may participate in nuclear egress of viral particles. Plays a role in the dispersal of several host nucleolar proteins including NCL/nucleolin and NPM1. Since deletion of host NCL/nucleolin negatively impact on nuclear egress, UL24 supposedly acts on this process through its effect on host nucleoli. In Homo sapiens (Human), this protein is Protein UL24 homolog.